The following is a 325-amino-acid chain: Beta-ketoacyl-[acyl-carrier-protein] synthase III (325 aa).

Residues Cys-112 and His-250 contribute to the active site. The interval 251-255 (QANIR) is ACP-binding. The active site involves Asn-280.

Belongs to the thiolase-like superfamily. FabH family. In terms of assembly, homodimer.

It is found in the cytoplasm. It catalyses the reaction malonyl-[ACP] + acetyl-CoA + H(+) = 3-oxobutanoyl-[ACP] + CO2 + CoA. Its pathway is lipid metabolism; fatty acid biosynthesis. In terms of biological role, catalyzes the condensation reaction of fatty acid synthesis by the addition to an acyl acceptor of two carbons from malonyl-ACP. Catalyzes the first condensation reaction which initiates fatty acid synthesis and may therefore play a role in governing the total rate of fatty acid production. Possesses both acetoacetyl-ACP synthase and acetyl transacylase activities. Its substrate specificity determines the biosynthesis of branched-chain and/or straight-chain of fatty acids. The sequence is that of Beta-ketoacyl-[acyl-carrier-protein] synthase III from Streptococcus mutans serotype c (strain ATCC 700610 / UA159).